Reading from the N-terminus, the 501-residue chain is G protein-activated inward rectifier potassium channel 1 (501 aa).

The segment at 1 to 40 (MSALRRKFGDDYQVVTTSSSGSGLQPQGPGQGPQQQLVPK) is disordered. The Cytoplasmic segment spans residues 1–80 (MSALRRKFGD…LFTTLVDLKW (80 aa)). Residues 18 to 37 (SSSGSGLQPQGPGQGPQQQL) show a composition bias toward low complexity. Residues 81-105 (RWNLFIFILTYTVAWLFMASMWWVI) traverse the membrane as a helical segment. At 106 to 129 (AYTRGDLNKAHVGNYTPCVANVYN) the chain is on the extracellular side. N-linked (GlcNAc...) asparagine glycosylation is present at Asn-119. The segment at residues 130–141 (FPSAFLFFIETE) is an intramembrane region (helical; Pore-forming). The pore-forming intramembrane region spans 142–148 (ATIGYGY). Positions 143–148 (TIGYGY) match the Selectivity filter motif. Residues 149-157 (RYITDKCPE) are Extracellular-facing. Residues 158–179 (GIILFLFQSILGSIVDAFLIGC) form a helical membrane-spanning segment. Residues 180–501 (MFIKMSQPKK…LRKMNSDRFT (322 aa)) lie on the Cytoplasmic side of the membrane. The polyphosphoinositide (PIP2)-binding stretch occupies residues 182–209 (IKMSQPKKRAETLMFSEHAVISMRDGKL). Ser-385 and Ser-424 each carry phosphoserine.

It belongs to the inward rectifier-type potassium channel (TC 1.A.2.1) family. KCNJ3 subfamily. Associates with KCNJ5/GIRK4 or KCNJ6/GIRK2 or KCNJ9/GIRK3 to form a G-protein activated heteromultimer pore-forming unit. The resulting inward current is much larger.

The protein localises to the membrane. It carries out the reaction K(+)(in) = K(+)(out). Heteromultimer composed of KCNJ3/GIRK1 and KCNJ5/GIRK4 is activated by phosphatidylinositol 4,5 biphosphate (PtdIns(4,5)P2). Inward rectifier potassium channels are characterized by a greater tendency to allow potassium to flow into the cell rather than out of it. Their voltage dependence is regulated by the concentration of extracellular potassium; as external potassium is raised, the voltage range of the channel opening shifts to more positive voltages. The inward rectification is mainly due to the blockage of outward current by internal magnesium. This potassium channel is controlled by G proteins. This receptor plays a crucial role in regulating the heartbeat. The protein is G protein-activated inward rectifier potassium channel 1 (KCNJ3) of Bos taurus (Bovine).